A 421-amino-acid polypeptide reads, in one-letter code: Accessory Sec system protein translocase subunit SecY2 (421 aa).

A run of 10 helical transmembrane segments spans residues leucine 17–valine 37, phenylalanine 69–isoleucine 89, threonine 102–isoleucine 122, phenylalanine 139–leucine 159, isoleucine 165–threonine 185, valine 204–valine 224, proline 254–leucine 274, proline 299–isoleucine 319, serine 358–isoleucine 378, and threonine 383–isoleucine 403.

This sequence belongs to the SecY/SEC61-alpha family. SecY2 subfamily. In terms of assembly, component of the accessory SecA2/SecY2 protein translocase complex required to export cell wall proteins. May form heterotrimers with SecE and SecG subunits.

It is found in the cell membrane. Its function is as follows. Part of the accessory SecA2/SecY2 system specifically required for export of possible cell wall proteins. The central subunit of a protein translocation channel. The protein is Accessory Sec system protein translocase subunit SecY2 of Leuconostoc gelidum subsp. gasicomitatum (strain DSM 15947 / CCUG 46042 / CECT 5767 / JCM 12535 / LMG 18811 / NBRC 113245 / TB1-10) (Leuconostoc gasicomitatum).